Reading from the N-terminus, the 102-residue chain is Large ribosomal subunit protein bL21 (102 aa).

Belongs to the bacterial ribosomal protein bL21 family. Part of the 50S ribosomal subunit. Contacts protein L20.

This protein binds to 23S rRNA in the presence of protein L20. This is Large ribosomal subunit protein bL21 from Enterococcus faecalis (strain ATCC 700802 / V583).